Reading from the N-terminus, the 140-residue chain is Mite allergen Der p 21.0101 (140 aa).

The first 19 residues, 1–19, serve as a signal peptide directing secretion; the sequence is MKFIITLFAAIVMAAAVSG. 2 immunodominant conformational IgE-binding epitope regions span residues 20–53 and 108–140; these read FIVG…EKGL and YNYE…DEYY.

It belongs to the mite group 5 allergen family. In terms of assembly, monomer. Homodimer. As to expression, expressed in the epithelium, lumen and microvilli of the midgut, and in feces.

It localises to the cytoplasm. Its subcellular location is the endoplasmic reticulum. The protein resides in the vesicle. It is found in the secreted. This is Mite allergen Der p 21.0101 from Dermatophagoides pteronyssinus (European house dust mite).